We begin with the raw amino-acid sequence, 277 residues long: UBX domain-containing protein 8 (277 aa).

Position 1 (Met-1) is a topological domain, cytoplasmic. The helical transmembrane segment at 2–22 (ASRGVVGLFLLSALPLLCLEL) threads the bilayer. Residues 23 to 33 (RRGIPSLGIKD) lie on the Lumenal side of the membrane. Residues 34 to 54 (LILLSGRIFLLLALLTLVISV) form a helical membrane-spanning segment. Over 55–277 (TTSWFNSLKP…NVEEKEQSSQ (223 aa)) the chain is Cytoplasmic. The tract at residues 64 to 89 (PSQGHLKEGEKENEKRRRLVRERQQE) is disordered. Residues 68-89 (HLKEGEKENEKRRRLVRERQQE) are compositionally biased toward basic and acidic residues. The UBX domain occupies 193–269 (TAEEVVTVAL…GITVDTVLNV (77 aa)).

In terms of assembly, interacts with SYVN1 and VCP. In terms of tissue distribution, highly expressed in gonads. In testis, expressed in post-meiotic round spermatids, while in ovaries it is expressed in granulosa cells.

The protein localises to the endoplasmic reticulum membrane. Its function is as follows. Involved in endoplasmic reticulum-associated degradation (ERAD) for misfolded lumenal proteins, possibly by tethering VCP to the endoplasmic reticulum membrane. May play a role in reproduction. The protein is UBX domain-containing protein 8 (Ubxn8) of Mus musculus (Mouse).